The sequence spans 131 residues: Large ribosomal subunit protein bL12c (131 aa).

The span at 106-125 shows a compositional bias: basic and acidic residues; the sequence is KDNTNKENSEEIKQQLEEAG. The interval 106–131 is disordered; that stretch reads KDNTNKENSEEIKQQLEEAGAKVSIK.

This sequence belongs to the bacterial ribosomal protein bL12 family. Homodimer. Part of the ribosomal stalk of the 50S ribosomal subunit. Forms a multimeric L10(L12)X complex, where L10 forms an elongated spine to which 2 to 4 L12 dimers bind in a sequential fashion. Binds GTP-bound translation factors.

The protein resides in the plastid. The protein localises to the chloroplast. Forms part of the ribosomal stalk which helps the ribosome interact with GTP-bound translation factors. Is thus essential for accurate translation. This Gracilaria tenuistipitata var. liui (Red alga) protein is Large ribosomal subunit protein bL12c.